The following is a 436-amino-acid chain: Histidinol dehydrogenase (436 aa).

The NAD(+) site is built by Tyr136, Gln198, and Asn221. Positions 244, 266, and 269 each coordinate substrate. Residues Gln266 and His269 each coordinate Zn(2+). Residues Glu334 and His335 each act as proton acceptor in the active site. Substrate-binding residues include His335, Asp368, Glu422, and His427. Residue Asp368 participates in Zn(2+) binding. Residue His427 coordinates Zn(2+).

The protein belongs to the histidinol dehydrogenase family. The cofactor is Zn(2+).

It carries out the reaction L-histidinol + 2 NAD(+) + H2O = L-histidine + 2 NADH + 3 H(+). It participates in amino-acid biosynthesis; L-histidine biosynthesis; L-histidine from 5-phospho-alpha-D-ribose 1-diphosphate: step 9/9. Its function is as follows. Catalyzes the sequential NAD-dependent oxidations of L-histidinol to L-histidinaldehyde and then to L-histidine. The protein is Histidinol dehydrogenase of Dehalococcoides mccartyi (strain ATCC BAA-2266 / KCTC 15142 / 195) (Dehalococcoides ethenogenes (strain 195)).